Consider the following 176-residue polypeptide: Vitamin K epoxide reductase complex subunit 1-like protein 1 (176 aa).

Over 1–13 (MAAPVLLRVSVPR) the chain is Cytoplasmic. A helical transmembrane segment spans residues 14–36 (WERVARYAVCAAGILLSIYAYHV). Residues 37–87 (EREKERDPEHRALCDLGPWVKCSAALASRWGRGFGLLGSIFGKDGVLNQPN) are Lumenal-facing. C50 and C58 are oxidised to a cystine. Position 87 (N87) interacts with (S)-warfarin. Residues 88–102 (SVFGLIFYILQLLLG) traverse the membrane as a helical segment. At 103 to 107 (MTASA) the chain is on the cytoplasmic side. A helical membrane pass occupies residues 108–135 (VAALVLMTSSIVSVVGSLYLAYILYFVL). The Lumenal segment spans residues 136-138 (KEF). An intrachain disulfide couples C139 to C142. A helical membrane pass occupies residues 139-160 (CIICVTTYVLNFLLLIINYKRL). Positions 142 and 146 each coordinate phylloquinone. (S)-warfarin is bound at residue Y146. At 161–176 (VYLNEAWKRQLQPKED) the chain is on the cytoplasmic side.

The protein belongs to the VKOR family. In terms of tissue distribution, detected in testis and lung.

Its subcellular location is the endoplasmic reticulum membrane. The catalysed reaction is phylloquinone + [protein]-disulfide + H2O = 2,3-epoxyphylloquinone + [protein]-dithiol. The enzyme catalyses phylloquinol + [protein]-disulfide = phylloquinone + [protein]-dithiol. Its activity is regulated as follows. Inhibited by warfarin (coumadin). Warfarin locks VKORC1 in both redox states into the closed conformation. Its function is as follows. Involved in vitamin K metabolism. Can reduce inactive vitamin K 2,3-epoxide to active vitamin K, and may contribute to vitamin K-mediated protection against oxidative stress. Plays a role in vitamin K-dependent gamma-carboxylation of Glu residues in target proteins. This is Vitamin K epoxide reductase complex subunit 1-like protein 1 (Vkorc1l1) from Mus musculus (Mouse).